Consider the following 49-residue polypeptide: Large ribosomal subunit protein bL33 (49 aa).

It belongs to the bacterial ribosomal protein bL33 family.

The sequence is that of Large ribosomal subunit protein bL33 from Caldanaerobacter subterraneus subsp. tengcongensis (strain DSM 15242 / JCM 11007 / NBRC 100824 / MB4) (Thermoanaerobacter tengcongensis).